A 115-amino-acid chain; its full sequence is Large ribosomal subunit protein bL19 (115 aa).

Belongs to the bacterial ribosomal protein bL19 family.

Functionally, this protein is located at the 30S-50S ribosomal subunit interface and may play a role in the structure and function of the aminoacyl-tRNA binding site. The polypeptide is Large ribosomal subunit protein bL19 (Francisella philomiragia subsp. philomiragia (strain ATCC 25017 / CCUG 19701 / FSC 153 / O#319-036)).